Here is a 167-residue protein sequence, read N- to C-terminus: MTREEKSIAIENLTAQLAGTNIIYISDISGLNAETTSNLRRACFKAGIKLEVVKNTLLAKAMEASSNDYGDLPTVLSGNSAIFISDVANAPGKIIKDFRKKSDKPVLKGAYINSEVYIGDNQLDALATIKSKEELIGEIIGLLQSPAQRIISALQNKFAGSEEEGAE.

The protein belongs to the universal ribosomal protein uL10 family. Part of the ribosomal stalk of the 50S ribosomal subunit. The N-terminus interacts with L11 and the large rRNA to form the base of the stalk. The C-terminus forms an elongated spine to which L12 dimers bind in a sequential fashion forming a multimeric L10(L12)X complex.

In terms of biological role, forms part of the ribosomal stalk, playing a central role in the interaction of the ribosome with GTP-bound translation factors. This Flavobacterium johnsoniae (strain ATCC 17061 / DSM 2064 / JCM 8514 / BCRC 14874 / CCUG 350202 / NBRC 14942 / NCIMB 11054 / UW101) (Cytophaga johnsonae) protein is Large ribosomal subunit protein uL10.